Here is a 1481-residue protein sequence, read N- to C-terminus: RNA helicase aquarius (1481 aa).

Positions 1–416 (MAAPAQPKKI…LVSRHERRIS (416 aa)) are helical region with structural similarity to ARM repeat domains. Residues 417–1481 (QIQQLNQMPL…DAESVPTETE (1065 aa)) form a required for assembly of the IB complex region. The segment at 754–773 (RSGKGKKRKDADGEEDDTEE) is disordered. ATP-binding positions include Q801, Q806, and 826 to 831 (GTGKTD). N6-acetyllysine is present on K1055. Over residues 1396 to 1414 (EEGEEGQSQETEMEAEEET) the composition is skewed to acidic residues. The segment at 1396–1481 (EEGEEGQSQE…DAESVPTETE (86 aa)) is disordered. Residues 1418–1448 (QGNLTPSPADASLSQETPAAQPDCSSQTEDT) show a composition bias toward polar residues. A compositionally biased stretch (low complexity) spans 1455–1468 (ATAAEPVSAAAEAA).

Belongs to the CWF11 family. In terms of assembly, identified in the spliceosome C complex. Component of the XAB2 complex, a multimeric protein complex composed of XAB2, PRPF19, AQR, ZNF830, ISY1, and PPIE. Identified in a pentameric intron-binding (IB) complex composed of AQR, XAB2, ISY1, ZNF830 and PPIE that is incorporated into the spliceosome as a preassembled complex. The IB complex does not contain PRPF19. Within the spliceosome, interacts with SNRPA1, SF3B1, SF3B3, SF3A1 and SF3A2.

It is found in the nucleus. It localises to the nucleoplasm. It catalyses the reaction ATP + H2O = ADP + phosphate + H(+). Functionally, involved in pre-mRNA splicing as component of the spliceosome. Intron-binding spliceosomal protein required to link pre-mRNA splicing and snoRNP (small nucleolar ribonucleoprotein) biogenesis. Plays a key role in position-dependent assembly of intron-encoded box C/D small snoRNP, splicing being required for snoRNP assembly. May act by helping the folding of the snoRNA sequence. Binds to intron of pre-mRNAs in a sequence-independent manner, contacting the region between snoRNA and the branchpoint of introns (40 nucleotides upstream of the branchpoint) during the late stages of splicing. Has ATP-dependent RNA helicase activity and can unwind double-stranded RNA molecules with a 3' overhang (in vitro). In Mus musculus (Mouse), this protein is RNA helicase aquarius (Aqr).